The sequence spans 203 residues: SOSS complex subunit B1-A (203 aa).

Residues 22–92 (IVLETGRVTK…TLYTGRGGDL (71 aa)) constitute a DNA-binding region (OB). A disordered region spans residues 110-203 (EPNPEYIAQQ…GKESRRTGKR (94 aa)). Low complexity predominate over residues 118-140 (QQSQSKQGQQESGTGTNNHNSSS). The span at 149–182 (ENGNGSNSSGPPAHQSTAPAHSASGRITRSQPNH) shows a compositional bias: polar residues.

It belongs to the SOSS-B family. SOSS-B1 subfamily. As to quaternary structure, component of the SOSS complex, composed of soss-b (soss-b1/nabp2 or soss-b2/nabp1), soss-a/ints3 and soss-c/inip. SOSS complexes containing soss-b1/nabp2 are more abundant than complexes containing soss-b2/nabp1.

The protein localises to the nucleus. In terms of biological role, component of the SOSS complex, a multiprotein complex that functions downstream of the MRN complex to promote DNA repair and G2/M checkpoint. In the SOSS complex, acts as a sensor of single-stranded DNA that binds to single-stranded DNA. The SOSS complex associates with DNA lesions and influences diverse endpoints in the cellular DNA damage response including cell-cycle checkpoint activation, recombinational repair and maintenance of genomic stability. Required for efficient homologous recombination-dependent repair of double-strand breaks (DSBs). The sequence is that of SOSS complex subunit B1-A (nabp2-a) from Xenopus laevis (African clawed frog).